Here is a 109-residue protein sequence, read N- to C-terminus: MNIDLQRRYDSSDDFFSLGGSVVMKLSADAAIAVCERAGQHGLVVARIEGGIWHFPGFEARLDCIWDGIDPPVDVGVAEQNNLAAAEFVRSESQEHDVFVVTAPEITGW.

Specifically interacts with cognate toxin CdiA, which inhibits the toxin.

Functionally, immunity protein component of a toxin-immunity protein module, which functions as a cellular contact-dependent growth inhibition (CDI) system. CDI modules allow bacteria to communicate with and inhibit the growth of closely related neighboring bacteria in a contact-dependent fashion. Neutralizes the toxic activity of cognate toxin CdiA (C-terminal 282 residue CT fragment) upon expression in E.coli. Does not inhibit toxic activity of CdiA from other strains of B.pseudomallei. The protein is Immunity protein CdiI (cdiI) of Burkholderia pseudomallei (Pseudomonas pseudomallei).